A 666-amino-acid polypeptide reads, in one-letter code: tRNA 5-methylaminomethyl-2-thiouridine biosynthesis bifunctional protein MnmC (666 aa).

Residues 1 to 245 form a tRNA (mnm(5)s(2)U34)-methyltransferase region; it reads MKQYAIQPAT…KREMLCGVME (245 aa). Positions 270–666 are FAD-dependent cmnm(5)s(2)U34 oxidoreductase; that stretch reads IGGGIASALL…RKLLKGKAVK (397 aa).

In the N-terminal section; belongs to the methyltransferase superfamily. tRNA (mnm(5)s(2)U34)-methyltransferase family. The protein in the C-terminal section; belongs to the DAO family. Requires FAD as cofactor.

Its subcellular location is the cytoplasm. It carries out the reaction 5-aminomethyl-2-thiouridine(34) in tRNA + S-adenosyl-L-methionine = 5-methylaminomethyl-2-thiouridine(34) in tRNA + S-adenosyl-L-homocysteine + H(+). Functionally, catalyzes the last two steps in the biosynthesis of 5-methylaminomethyl-2-thiouridine (mnm(5)s(2)U) at the wobble position (U34) in tRNA. Catalyzes the FAD-dependent demodification of cmnm(5)s(2)U34 to nm(5)s(2)U34, followed by the transfer of a methyl group from S-adenosyl-L-methionine to nm(5)s(2)U34, to form mnm(5)s(2)U34. This is tRNA 5-methylaminomethyl-2-thiouridine biosynthesis bifunctional protein MnmC from Salmonella arizonae (strain ATCC BAA-731 / CDC346-86 / RSK2980).